Here is a 150-residue protein sequence, read N- to C-terminus: Histone H2B.2 (150 aa).

Over residues 1–16 (MAPKAEKKPAAKKPAE) the composition is skewed to basic and acidic residues. The disordered stretch occupies residues 1–57 (MAPKAEKKPAAKKPAEEEPAAEKAPAGKKPKAEKRVPAGKSAGKEGGEGKRGRKKGK). N6-acetyllysine occurs at positions 7 and 34. Lys-146 participates in a covalent cross-link: Glycyl lysine isopeptide (Lys-Gly) (interchain with G-Cter in ubiquitin).

Belongs to the histone H2B family. In terms of assembly, the nucleosome is a histone octamer containing two molecules each of H2A, H2B, H3 and H4 assembled in one H3-H4 heterotetramer and two H2A-H2B heterodimers. The octamer wraps approximately 147 bp of DNA. Can be acetylated to form H2BK6ac and H2BK33ac. In terms of processing, monoubiquitinated to form H2BK143ub1; may give a specific tag for epigenetic transcriptional activation.

It localises to the nucleus. The protein resides in the chromosome. Its function is as follows. Core component of nucleosome. Nucleosomes wrap and compact DNA into chromatin, limiting DNA accessibility to the cellular machineries which require DNA as a template. Histones thereby play a central role in transcription regulation, DNA repair, DNA replication and chromosomal stability. DNA accessibility is regulated via a complex set of post-translational modifications of histones, also called histone code, and nucleosome remodeling. In Zea mays (Maize), this protein is Histone H2B.2.